A 447-amino-acid polypeptide reads, in one-letter code: Clusterin (447 aa).

Residues 1–21 (MKILLLCVALLLTWDNGMVLG) form the signal peptide. The short motif at 77–80 (KKKK) is the Nuclear localization signal element. 5 disulfide bridges follow: C101/C312, C112/C304, C115/C301, C120/C294, and C128/C284. N-linked (GlcNAc...) asparagine glycosylation is present at N102. S132 is subject to Phosphoserine. N144, N290, N327, N353, and N373 each carry an N-linked (GlcNAc...) asparagine glycan. Phosphoserine is present on S394. The Nuclear localization signal motif lies at 441-445 (RRKSR).

It belongs to the clusterin family. Antiparallel disulfide-linked heterodimer of an alpha chain and a beta chain. Self-associates and forms higher oligomers. Interacts with a broad range of misfolded proteins, including APP, APOC2 and LYZ. Slightly acidic pH promotes interaction with misfolded proteins. Forms high-molecular weight oligomers upon interaction with misfolded proteins. Interacts with APOA1, LRP2, CLUAP1 and PON1. Interacts with the complement membrane attack complex. Interacts (via alpha chain) with XRCC6. Interacts with SYVN1, COMMD1, BTRC, CUL1 and with ubiquitin and SCF (SKP1-CUL1-F-box protein) E3 ubiquitin-protein ligase complexes. Interacts (via alpha chain) with BAX in stressed cells, where BAX undergoes a conformation change leading to association with the mitochondrial membrane. Does not interact with BAX in unstressed cells. Found in a complex with LTF, CLU, EPPIN and SEMG1. Interacts (immaturely glycosylated pre-secreted form) with HSPA5; this interaction promotes CLU stability and facilitates stress-induced CLU retrotranslocation from the secretory pathway to the mitochondria, thereby reducing stress-induced apoptosis by stabilizing mitochondrial membrane integrity. Interacts with BCL2L1; this interaction releases and activates BAX and promotes cell death. Interacts with TGFBR2 and ACVR1. Interacts (secreted form) with STMN3; this interaction may act as an important modulator during neuronal differentiation. Interacts with VLDLR and LRP8. Proteolytically cleaved on its way through the secretory system, probably within the Golgi lumen. Proteolytic cleavage is not necessary for its chaperone activity. All non-secreted forms are not proteolytically cleaved. Chaperone activity of uncleaved forms is dependent on a non-reducing environment. Post-translationally, polyubiquitinated, leading to proteasomal degradation. Under cellular stress, the intracellular level of cleaved form is reduced due to proteasomal degradation. In terms of processing, extensively glycosylated with sulfated N-linked carbohydrates. About 30% of the protein mass is comprised of complex N-linked carbohydrate. Endoplasmic reticulum (ER) stress induces changes in glycosylation status and increases level of hypoglycosylated forms. Core carbohydrates are essential for chaperone activity. Non-secreted forms are hypoglycosylated or unglycosylated. As to expression, detected in Sertoli cells (at protein level). Detected in cultured Sertoli cells, testis, epididymis, liver and brain.

It is found in the secreted. It localises to the nucleus. The protein resides in the cytoplasm. The protein localises to the mitochondrion membrane. Its subcellular location is the cytosol. It is found in the microsome. It localises to the endoplasmic reticulum. The protein resides in the mitochondrion. The protein localises to the perinuclear region. Its subcellular location is the cytoplasmic vesicle. It is found in the secretory vesicle. It localises to the chromaffin granule. Functionally, functions as extracellular chaperone that prevents aggregation of non native proteins. Prevents stress-induced aggregation of blood plasma proteins. Inhibits formation of amyloid fibrils by APP, APOC2, B2M, CALCA, CSN3, SNCA and aggregation-prone LYZ variants (in vitro). Does not require ATP. Maintains partially unfolded proteins in a state appropriate for subsequent refolding by other chaperones, such as HSPA8/HSC70. Does not refold proteins by itself. Binding to cell surface receptors triggers internalization of the chaperone-client complex and subsequent lysosomal or proteasomal degradation. When secreted, protects cells against apoptosis and against cytolysis by complement: inhibits assembly of the complement membrane attack complex (MAC) by preventing polymerization of C9 pore component of the MAC complex. Intracellular forms interact with ubiquitin and SCF (SKP1-CUL1-F-box protein) E3 ubiquitin-protein ligase complexes and promote the ubiquitination and subsequent proteasomal degradation of target proteins. Promotes proteasomal degradation of COMMD1 and IKBKB. Modulates NF-kappa-B transcriptional activity. Following stress, promotes apoptosis. Inhibits apoptosis when associated with the mitochondrial membrane by interference with BAX-dependent release of cytochrome c into the cytoplasm. Plays a role in the regulation of cell proliferation. An intracellular form suppresses stress-induced apoptosis by stabilizing mitochondrial membrane integrity through interaction with HSPA5. Secreted form does not affect caspase or BAX-mediated intrinsic apoptosis and TNF-induced NF-kappa-B-activity. Secreted form act as an important modulator during neuronal differentiation through interaction with STMN3. Plays a role in the clearance of immune complexes that arise during cell injury. The chain is Clusterin from Rattus norvegicus (Rat).